Consider the following 345-residue polypeptide: Methylthioribose-1-phosphate isomerase 2 (345 aa).

Residues 47-49 (RGA), Arg88, and Gln194 contribute to the substrate site. Catalysis depends on Asp235, which acts as the Proton donor. 245-246 (NK) contributes to the substrate binding site.

It belongs to the eIF-2B alpha/beta/delta subunits family. MtnA subfamily.

It catalyses the reaction 5-(methylsulfanyl)-alpha-D-ribose 1-phosphate = 5-(methylsulfanyl)-D-ribulose 1-phosphate. It participates in amino-acid biosynthesis; L-methionine biosynthesis via salvage pathway; L-methionine from S-methyl-5-thio-alpha-D-ribose 1-phosphate: step 1/6. Functionally, catalyzes the interconversion of methylthioribose-1-phosphate (MTR-1-P) into methylthioribulose-1-phosphate (MTRu-1-P). This is Methylthioribose-1-phosphate isomerase 2 from Pseudothermotoga lettingae (strain ATCC BAA-301 / DSM 14385 / NBRC 107922 / TMO) (Thermotoga lettingae).